Reading from the N-terminus, the 816-residue chain is Larval serum protein 1 alpha chain (816 aa).

A signal peptide spans 1–16 (MKFAIAFLACVAVVTA).

This sequence belongs to the hemocyanin family. In terms of assembly, heterohexamer, composed of three subunits, alpha, beta and gamma. In terms of tissue distribution, larval hemolymph.

The protein localises to the secreted. It is found in the extracellular space. Functionally, larval storage protein (LSP) which may serve as a store of amino acids for synthesis of adult proteins. This Drosophila melanogaster (Fruit fly) protein is Larval serum protein 1 alpha chain (Lsp1alpha).